Consider the following 227-residue polypeptide: Cytochrome c oxidase subunit 2 (227 aa).

At 1 to 14 (MAYPMQLGLQDATS) the chain is on the mitochondrial intermembrane side. The helical transmembrane segment at 15–45 (PIMEELTDFHDHTLMIVFLISTLVLYIISMM) threads the bilayer. Residues 46–59 (LTTKLTHTSTMDAQ) are Mitochondrial matrix-facing. Residues 60–87 (EVETIWTVLPAVILVMIALPSLRILYMM) form a helical membrane-spanning segment. The Mitochondrial intermembrane segment spans residues 88-227 (DEINDPYLTV…QFESWASSMT (140 aa)). Cu cation contacts are provided by His-161, Cys-196, Glu-198, Cys-200, His-204, and Met-207. Glu-198 lines the Mg(2+) pocket.

It belongs to the cytochrome c oxidase subunit 2 family. As to quaternary structure, component of the cytochrome c oxidase (complex IV, CIV), a multisubunit enzyme composed of 14 subunits. The complex is composed of a catalytic core of 3 subunits MT-CO1, MT-CO2 and MT-CO3, encoded in the mitochondrial DNA, and 11 supernumerary subunits COX4I, COX5A, COX5B, COX6A, COX6B, COX6C, COX7A, COX7B, COX7C, COX8 and NDUFA4, which are encoded in the nuclear genome. The complex exists as a monomer or a dimer and forms supercomplexes (SCs) in the inner mitochondrial membrane with NADH-ubiquinone oxidoreductase (complex I, CI) and ubiquinol-cytochrome c oxidoreductase (cytochrome b-c1 complex, complex III, CIII), resulting in different assemblies (supercomplex SCI(1)III(2)IV(1) and megacomplex MCI(2)III(2)IV(2)). Found in a complex with TMEM177, COA6, COX18, COX20, SCO1 and SCO2. Interacts with TMEM177 in a COX20-dependent manner. Interacts with COX20. Interacts with COX16. Cu cation is required as a cofactor.

The protein localises to the mitochondrion inner membrane. The catalysed reaction is 4 Fe(II)-[cytochrome c] + O2 + 8 H(+)(in) = 4 Fe(III)-[cytochrome c] + 2 H2O + 4 H(+)(out). Component of the cytochrome c oxidase, the last enzyme in the mitochondrial electron transport chain which drives oxidative phosphorylation. The respiratory chain contains 3 multisubunit complexes succinate dehydrogenase (complex II, CII), ubiquinol-cytochrome c oxidoreductase (cytochrome b-c1 complex, complex III, CIII) and cytochrome c oxidase (complex IV, CIV), that cooperate to transfer electrons derived from NADH and succinate to molecular oxygen, creating an electrochemical gradient over the inner membrane that drives transmembrane transport and the ATP synthase. Cytochrome c oxidase is the component of the respiratory chain that catalyzes the reduction of oxygen to water. Electrons originating from reduced cytochrome c in the intermembrane space (IMS) are transferred via the dinuclear copper A center (CU(A)) of subunit 2 and heme A of subunit 1 to the active site in subunit 1, a binuclear center (BNC) formed by heme A3 and copper B (CU(B)). The BNC reduces molecular oxygen to 2 water molecules using 4 electrons from cytochrome c in the IMS and 4 protons from the mitochondrial matrix. This Cratogeomys bursarius (Plains pocket gopher) protein is Cytochrome c oxidase subunit 2 (MT-CO2).